We begin with the raw amino-acid sequence, 190 residues long: UPF0200 protein TSIB_0920 (190 aa).

7–14 (GMPGSGKG) contributes to the ATP binding site.

It belongs to the UPF0200 family.

The chain is UPF0200 protein TSIB_0920 from Thermococcus sibiricus (strain DSM 12597 / MM 739).